The chain runs to 331 residues: Nacrein-like protein P1 (331 aa).

Positions 1–331 constitute an Alpha-carbonic anhydrase domain; the sequence is QSPINIVSYD…LHALRNVEGY (331 aa). Residues histidine 69, histidine 71, and histidine 94 each coordinate Zn(2+). Positions 138–240 are disordered; that stretch reads DEPDDEECKR…GENGHKHGCR (103 aa). Residues 144-156 show a composition bias toward basic and acidic residues; the sequence is ECKRILKGHHPDN. Residues 157–232 show a composition bias toward low complexity; the sequence is NENGNGDNGN…NNGENGNNGE (76 aa). Tandem repeats lie at residues 162 to 164, 165 to 167, 168 to 170, 171 to 173, 174 to 176, 177 to 179, 180 to 182, 183 to 185, 186 to 188, 189 to 191, 192 to 194, 195 to 197, 198 to 200, 201 to 203, 204 to 206, 207 to 209, 210 to 212, 213 to 215, 216 to 218, 219 to 221, 222 to 224, 225 to 227, 228 to 229, and 231 to 233. Residues 162–233 are 24 X 3 AA approximate tandem repeats of G-X-N; sequence GDNGNNGYNG…NGENGNNGEN (72 aa). 298 to 299 is a binding site for substrate; it reads TT.

Belongs to the alpha-carbonic anhydrase family. In terms of assembly, homooligomer; disulfide-linked. May also be disulfide-linked to insoluble organic matrix. Requires Zn(2+) as cofactor. As to expression, expressed in the mantle.

The protein resides in the secreted. It localises to the extracellular space. It is found in the extracellular matrix. The enzyme catalyses hydrogencarbonate + H(+) = CO2 + H2O. Functionally, acts as a negative regulator for calcification in the shells of mollusks. May function both as a calcium concentrator and as a carbonic anhydrase required for production of carbonate ions, which are assembled to CaCO(3) at mineralization sites. Is important for shell formation in both the calcitic prismatic layer and the aragonitic nacreous layer. Shows inhibitory activity of crystal formation when present in free state but, when attached to the insoluble matrix, may regulate the form and size of aragonite crystal. The protein is Nacrein-like protein P1 of Mizuhopecten yessoensis (Japanese scallop).